A 228-amino-acid polypeptide reads, in one-letter code: ATP synthase subunit a (228 aa).

Helical transmembrane passes span 19–39, 81–101, 107–127, 136–156, 178–198, and 204–224; these read AIYI…AVAV, LIAT…IPGF, SLNL…FEGI, FAGF…IEVI, LFLL…PYAL, and ILQA…AVVV.

This sequence belongs to the ATPase A chain family. As to quaternary structure, F-type ATPases have 2 components, CF(1) - the catalytic core - and CF(0) - the membrane proton channel. CF(1) has five subunits: alpha(3), beta(3), gamma(1), delta(1), epsilon(1). CF(0) has three main subunits: a(1), b(2) and c(9-12). The alpha and beta chains form an alternating ring which encloses part of the gamma chain. CF(1) is attached to CF(0) by a central stalk formed by the gamma and epsilon chains, while a peripheral stalk is formed by the delta and b chains.

The protein resides in the cell inner membrane. Key component of the proton channel; it plays a direct role in the translocation of protons across the membrane. This Campylobacter hominis (strain ATCC BAA-381 / DSM 21671 / CCUG 45161 / LMG 19568 / NCTC 13146 / CH001A) protein is ATP synthase subunit a.